We begin with the raw amino-acid sequence, 153 residues long: UPF0756 membrane protein BA_4840/GBAA_4840/BAS4489 (153 aa).

The next 4 membrane-spanning stretches (helical) occupy residues 8–28, 54–74, 87–107, and 117–137; these read FLFILLIIGLIAKNQSLTVAI, LGVTVITIAVLVPIATGEIGF, WIALASGVAVALLAKGGVQLL, and LVFGTIIAVALFNGVAVGPLI.

This sequence belongs to the UPF0756 family.

Its subcellular location is the cell membrane. The sequence is that of UPF0756 membrane protein BA_4840/GBAA_4840/BAS4489 from Bacillus anthracis.